The sequence spans 250 residues: MGQKTNPNGLRLGIIRTWDSQWCVNDKEIPALIKEDFLIRQLINNFSKRNSISQIEIQRLKEKTKNRITITIHTAKPGIIIGKDGETRNKIQAQLKKLTQKDINLNILEVKNPDKTAVLVAQNMAEQLENRMKFRRVQKMAIQKAFKAGAKGIKVLISGRLNGDEIARSERHDEGRVPLHTLRADIDYAALEAHTTYGVLGIKVWIFHGEVLPGQTILDTRKPFVSQNKFIKRPRYFKGGKNNHVDAKEN.

In terms of domain architecture, KH type-2 spans Ile-39–Lys-111.

This sequence belongs to the universal ribosomal protein uS3 family. Part of the 30S ribosomal subunit. Forms a tight complex with proteins S10 and S14.

Functionally, binds the lower part of the 30S subunit head. Binds mRNA in the 70S ribosome, positioning it for translation. The sequence is that of Small ribosomal subunit protein uS3 from Phytoplasma australiense.